Here is a 168-residue protein sequence, read N- to C-terminus: Small ribosomal subunit protein uS5 (168 aa).

Residues I17–V80 form the S5 DRBM domain.

It belongs to the universal ribosomal protein uS5 family. In terms of assembly, part of the 30S ribosomal subunit. Contacts proteins S4 and S8.

In terms of biological role, with S4 and S12 plays an important role in translational accuracy. Located at the back of the 30S subunit body where it stabilizes the conformation of the head with respect to the body. In Lactobacillus acidophilus (strain ATCC 700396 / NCK56 / N2 / NCFM), this protein is Small ribosomal subunit protein uS5.